Reading from the N-terminus, the 251-residue chain is Probable transcriptional regulatory protein RSal33209_2002 (251 aa).

The protein belongs to the TACO1 family.

It is found in the cytoplasm. This is Probable transcriptional regulatory protein RSal33209_2002 from Renibacterium salmoninarum (strain ATCC 33209 / DSM 20767 / JCM 11484 / NBRC 15589 / NCIMB 2235).